Consider the following 364-residue polypeptide: Phosphoserine aminotransferase (364 aa).

Residue Arg-41 participates in L-glutamate binding. Residues 75–76 (AS), Trp-100, Thr-155, Asp-175, and Gln-198 contribute to the pyridoxal 5'-phosphate site. Lys-199 carries the post-translational modification N6-(pyridoxal phosphate)lysine. 239–240 (NT) contacts pyridoxal 5'-phosphate.

Belongs to the class-V pyridoxal-phosphate-dependent aminotransferase family. SerC subfamily. Homodimer. Pyridoxal 5'-phosphate is required as a cofactor.

The protein resides in the cytoplasm. It carries out the reaction O-phospho-L-serine + 2-oxoglutarate = 3-phosphooxypyruvate + L-glutamate. It catalyses the reaction 4-(phosphooxy)-L-threonine + 2-oxoglutarate = (R)-3-hydroxy-2-oxo-4-phosphooxybutanoate + L-glutamate. It participates in amino-acid biosynthesis; L-serine biosynthesis; L-serine from 3-phospho-D-glycerate: step 2/3. Functionally, catalyzes the reversible conversion of 3-phosphohydroxypyruvate to phosphoserine and of 3-hydroxy-2-oxo-4-phosphonooxybutanoate to phosphohydroxythreonine. This is Phosphoserine aminotransferase from Streptococcus thermophilus (strain CNRZ 1066).